The sequence spans 197 residues: Probable NADPH:quinone oxidoreductase 1 (197 aa).

It belongs to the SsuE family. Homotetramer. The cofactor is FMN.

The catalysed reaction is a quinone + NADH + H(+) = a quinol + NAD(+). It catalyses the reaction a quinone + NADPH + H(+) = a quinol + NADP(+). Functionally, the enzyme apparently serves as a quinone reductase in connection with conjugation reactions of hydroquinones involved in detoxification pathways. The polypeptide is Probable NADPH:quinone oxidoreductase 1 (Oryza sativa subsp. japonica (Rice)).